A 291-amino-acid polypeptide reads, in one-letter code: N-acetylmannosamine kinase (291 aa).

Residues 5–12 (AIDIGGTK) and 132–139 (GVGGGVVS) each bind ATP. His156, Cys166, Cys168, and Cys173 together coordinate Zn(2+).

The protein belongs to the ROK (NagC/XylR) family. NanK subfamily. As to quaternary structure, homodimer.

It catalyses the reaction an N-acyl-D-mannosamine + ATP = an N-acyl-D-mannosamine 6-phosphate + ADP + H(+). It participates in amino-sugar metabolism; N-acetylneuraminate degradation; D-fructose 6-phosphate from N-acetylneuraminate: step 2/5. In terms of biological role, catalyzes the phosphorylation of N-acetylmannosamine (ManNAc) to ManNAc-6-P. The protein is N-acetylmannosamine kinase of Escherichia coli (strain SE11).